The primary structure comprises 162 residues: Protein FAM162B (162 aa).

The disordered stretch occupies residues 26–69 (EATRRPAPALPPRGLPCYSSGGAPSNSGPQGHGEIHRVPTQRRP). The chain crosses the membrane as a helical span at residues 107–127 (VKACYIMIGLTIIACFAVIVS).

Belongs to the UPF0389 family.

Its subcellular location is the membrane. This Homo sapiens (Human) protein is Protein FAM162B (FAM162B).